Here is a 425-residue protein sequence, read N- to C-terminus: Metalloprotease AF_0655 (425 aa).

Belongs to the peptidase U62 family.

Its function is as follows. Probable metalloprotease. The chain is Metalloprotease AF_0655 from Archaeoglobus fulgidus (strain ATCC 49558 / DSM 4304 / JCM 9628 / NBRC 100126 / VC-16).